A 518-amino-acid polypeptide reads, in one-letter code: 3-octaprenyl-4-hydroxybenzoate carboxy-lyase (518 aa).

Asn177 contacts Mn(2+). Prenylated FMN-binding positions include 180-182 (IYR), 194-196 (RWL), and 199-200 (RG). Residue Glu243 coordinates Mn(2+). Asp318 (proton donor) is an active-site residue.

This sequence belongs to the UbiD family. As to quaternary structure, homohexamer. It depends on prenylated FMN as a cofactor. The cofactor is Mn(2+).

Its subcellular location is the cell membrane. It carries out the reaction a 4-hydroxy-3-(all-trans-polyprenyl)benzoate + H(+) = a 2-(all-trans-polyprenyl)phenol + CO2. The protein operates within cofactor biosynthesis; ubiquinone biosynthesis. Catalyzes the decarboxylation of 3-octaprenyl-4-hydroxy benzoate to 2-octaprenylphenol, an intermediate step in ubiquinone biosynthesis. This Burkholderia lata (strain ATCC 17760 / DSM 23089 / LMG 22485 / NCIMB 9086 / R18194 / 383) protein is 3-octaprenyl-4-hydroxybenzoate carboxy-lyase.